Here is a 274-residue protein sequence, read N- to C-terminus: Diaminopimelate epimerase (274 aa).

Residues Asn11, Gln44, and Asn64 each coordinate substrate. Cys73 serves as the catalytic Proton donor. Substrate is bound by residues 74-75 (GN), Asn157, Asn190, and 208-209 (ER). Cys217 functions as the Proton acceptor in the catalytic mechanism. Position 218–219 (218–219 (GS)) interacts with substrate.

Belongs to the diaminopimelate epimerase family. As to quaternary structure, homodimer.

It is found in the cytoplasm. The catalysed reaction is (2S,6S)-2,6-diaminopimelate = meso-2,6-diaminopimelate. It participates in amino-acid biosynthesis; L-lysine biosynthesis via DAP pathway; DL-2,6-diaminopimelate from LL-2,6-diaminopimelate: step 1/1. Its function is as follows. Catalyzes the stereoinversion of LL-2,6-diaminopimelate (L,L-DAP) to meso-diaminopimelate (meso-DAP), a precursor of L-lysine and an essential component of the bacterial peptidoglycan. The sequence is that of Diaminopimelate epimerase from Proteus mirabilis (strain HI4320).